A 314-amino-acid polypeptide reads, in one-letter code: MEDSNSHPQNQTSKRKSSHPQKKQRMENETRSAKLLDLDVLDCPVCFEPLTIPTFQCDDGHIVCNFCFAKVSNKCPGPGCDLPIGNKRCFAMERVLESAFVPCQNTEFGCTKSVSYEKVSSHEKECNYSQCSCPNLECNYTGSYNIIYGHFMRRHLYNSTIVSSKWGYSTVDVLINIKEKVSVLWESRQKLLFVVQCFKERHGVYVTVRRIAPPASEFKKFSYRLSYSIDGHNVTYESPEVKRLLEVNSQIPDDSFMFVPNCLLHGFLIKPANEVQQVTIAQETVMEDPPTSLFKNSVPIREDQIQNAITNSIR.

Residues 1–12 (MEDSNSHPQNQT) show a composition bias toward polar residues. The tract at residues 1–31 (MEDSNSHPQNQTSKRKSSHPQKKQRMENETR) is disordered. The span at 13–23 (SKRKSSHPQKK) shows a compositional bias: basic residues. An RING-type; degenerate zinc finger spans residues 43 to 81 (CPVCFEPLTIPTFQCDDGHIVCNFCFAKVSNKCPGPGCD). The tract at residues 95–280 (VLESAFVPCQ…PANEVQQVTI (186 aa)) is SBD. The segment at 98 to 156 (SAFVPCQNTEFGCTKSVSYEKVSSHEKECNYSQCSCPNLECNYTGSYNIIYGHFMRRHL) adopts an SIAH-type zinc-finger fold. Residues Cys-103, Cys-110, His-122, Cys-126, Cys-133, Cys-138, His-150, and His-155 each coordinate Zn(2+).

This sequence belongs to the SINA (Seven in absentia) family.

The catalysed reaction is S-ubiquitinyl-[E2 ubiquitin-conjugating enzyme]-L-cysteine + [acceptor protein]-L-lysine = [E2 ubiquitin-conjugating enzyme]-L-cysteine + N(6)-ubiquitinyl-[acceptor protein]-L-lysine.. It participates in protein modification; protein ubiquitination. Functionally, E3 ubiquitin-protein ligase that mediates ubiquitination and subsequent proteasomal degradation of target proteins. E3 ubiquitin ligases accept ubiquitin from an E2 ubiquitin-conjugating enzyme in the form of a thioester and then directly transfers the ubiquitin to targeted substrates. It probably triggers the ubiquitin-mediated degradation of different substrates. This is E3 ubiquitin-protein ligase SINA-like 11 from Arabidopsis thaliana (Mouse-ear cress).